Here is a 518-residue protein sequence, read N- to C-terminus: Receptor-interacting serine/threonine-protein kinase 3 (518 aa).

Position 2 is a phosphoserine (serine 2). In terms of domain architecture, Protein kinase spans 21 to 287 (LENQELVGKG…ECLPKTDEVF (267 aa)). 27–35 (VGKGGFGTV) provides a ligand contact to ATP. A Glycyl lysine isopeptide (Lys-Gly) (interchain with G-Cter in ubiquitin) cross-link involves residue lysine 42. Lysine 50 lines the ATP pocket. The Proton acceptor role is filled by aspartate 142. Serine 164 is modified (phosphoserine). Threonine 182 is subject to Phosphothreonine. Phosphoserine; by autocatalysis is present on residues serine 199 and serine 227. Threonine 252 carries the post-translational modification Phosphothreonine. Serine 299 is subject to Phosphoserine. Residue threonine 333 is modified to Phosphothreonine. Residues lysine 351 and lysine 363 each participate in a glycyl lysine isopeptide (Lys-Gly) (interchain with G-Cter in ubiquitin) cross-link. Positions 355–443 (EEPPSSVPKK…WSCRTPEPNP (89 aa)) are disordered. Residues 384–408 (TAGTSSDSMAQPPQTPETSTFRNQM) are compositionally biased toward polar residues. Phosphoserine is present on serine 389. Threonine 401 carries the post-translational modification Phosphothreonine. The RIP homotypic interaction motif (RHIM) signature appears at 450–466 (VNIYNCSGVQVGDNNYL). The interval 476 to 518 (TWGLAPSGKGRGLQHPPPVGSQEGPKDPEAWSRPQGWYNHSGK) is disordered. Residue lysine 518 forms a Glycyl lysine isopeptide (Lys-Gly) (interchain with G-Cter in ubiquitin) linkage.

The protein belongs to the protein kinase superfamily. TKL Ser/Thr protein kinase family. Interacts (via RIP homotypic interaction motif) with RIPK1 (via RIP homotypic interaction motif); this interaction induces RIPK1 phosphorylation and formation of a RIPK1-RIPK3 necrosis-inducing complex. Interacts with MLKL; the interaction is direct and triggers necroptosis. Interacts with ZBP1 (via RIP homotypic interaction motif); interaction with ZBP1 activates RIPK3, triggering necroptosis. Upon TNF-induced necrosis, the RIPK1-RIPK3 dimer further interacts with PGAM5 and MLKL; the formation of this complex leads to PGAM5 phosphorylation and increase in PGAM5 phosphatase activity. Binds TRAF2 and is recruited to the TNFR-1 signaling complex. Interacts with PYGL, GLUL and GLUD1; these interactions result in activation of these metabolic enzymes. Interacts with BIRC2/c-IAP1, BIRC3/c-IAP2 and XIAP/BIRC4. Interacts with ARHGEF2. Interacts with PELI1 (via atypical FHA domain); the phosphorylated form at Thr-182 binds preferentially to PELI1. Interacts with BUB1B, TRAF2 and STUB1. Interacts with CASP6. Component of the AIM2 PANoptosome complex, a multiprotein complex that drives inflammatory cell death (PANoptosis). In terms of assembly, (Microbial infection) Interacts (via RIP homotypic interaction motif/RHIM) with herpes simplex virus 1/HHV-1 protein RIR1/ICP6 (via RHIM); this interaction may induce heteromeric amyloid assemblies and prevent necroptosis activation. As to quaternary structure, (Microbial infection) Interacts (via RIP homotypic interaction motif/RHIM) with herpes simplex virus 2/HHV-2 protein RIR1/ICP10 (via RHIM); this interaction prevents necroptosis activation. In terms of processing, (Microbial infection) Proteolytically cleaved by S.flexneri OspD3 within the RIP homotypic interaction motif (RHIM), leading to its degradation and inhibition of necroptosis. Post-translationally, RIPK1 and RIPK3 undergo reciprocal auto- and trans-phosphorylation. Autophosphorylated following interaction with ZBP1. Phosphorylation of Ser-199 plays a role in the necroptotic function of RIPK3. Autophosphorylates at Ser-227 following activation by ZBP1: phosphorylation at these sites is a hallmark of necroptosis and is required for binding MLKL. Phosphorylation at Thr-182 is important for its kinase activity, interaction with PELI1 and PELI1-mediated 'Lys-48'-linked polyubiquitination and for its ability to mediate TNF-induced necroptosis. Polyubiquitinated with 'Lys-48' and 'Lys-63'-linked chains by BIRC2/c-IAP1 and BIRC3/c-IAP2, leading to activation of NF-kappa-B. Polyubiquitinated with 'Lys-48'-linked chains by PELI1 leading to its subsequent proteasome-dependent degradation. Ubiquitinated by STUB1 leading to its subsequent proteasome-dependent degradation. Deubiquitinated by USP22. As to expression, highly expressed in the pancreas. Detected at lower levels in heart, placenta, lung and kidney. In terms of tissue distribution, expression is significantly increased in colon and lung cancers.

It localises to the cytoplasm. The protein resides in the cytosol. The protein localises to the nucleus. It catalyses the reaction L-seryl-[protein] + ATP = O-phospho-L-seryl-[protein] + ADP + H(+). It carries out the reaction L-threonyl-[protein] + ATP = O-phospho-L-threonyl-[protein] + ADP + H(+). Its activity is regulated as follows. Activity is stimulated by ZBP1, which senses double-stranded Z-RNA structures. RIPK3-dependent necroptosis is inhibited by RIPK1: RIPK1 prevents the ZBP1-induced activation of RIPK3 via FADD-mediated recruitment of CASP8, which cleaves RIPK1 and limits TNF-induced necroptosis. Serine/threonine-protein kinase that activates necroptosis and apoptosis, two parallel forms of cell death. Necroptosis, a programmed cell death process in response to death-inducing TNF-alpha family members, is triggered by RIPK3 following activation by ZBP1. Activated RIPK3 forms a necrosis-inducing complex and mediates phosphorylation of MLKL, promoting MLKL localization to the plasma membrane and execution of programmed necrosis characterized by calcium influx and plasma membrane damage. In addition to TNF-induced necroptosis, necroptosis can also take place in the nucleus in response to orthomyxoviruses infection: following ZBP1 activation, which senses double-stranded Z-RNA structures, nuclear RIPK3 catalyzes phosphorylation and activation of MLKL, promoting disruption of the nuclear envelope and leakage of cellular DNA into the cytosol. Also regulates apoptosis: apoptosis depends on RIPK1, FADD and CASP8, and is independent of MLKL and RIPK3 kinase activity. Phosphorylates RIPK1: RIPK1 and RIPK3 undergo reciprocal auto- and trans-phosphorylation. In some cell types, also able to restrict viral replication by promoting cell death-independent responses. In response to Zika virus infection in neurons, promotes a cell death-independent pathway that restricts viral replication: together with ZBP1, promotes a death-independent transcriptional program that modifies the cellular metabolism via up-regulation expression of the enzyme ACOD1/IRG1 and production of the metabolite itaconate. Itaconate inhibits the activity of succinate dehydrogenase, generating a metabolic state in neurons that suppresses replication of viral genomes. RIPK3 binds to and enhances the activity of three metabolic enzymes: GLUL, GLUD1, and PYGL. These metabolic enzymes may eventually stimulate the tricarboxylic acid cycle and oxidative phosphorylation, which could result in enhanced ROS production. In terms of biological role, (Microbial infection) In case of herpes simplex virus 1/HHV-1 infection, forms heteromeric amyloid structures with HHV-1 protein RIR1/ICP6 which may inhibit RIPK3-mediated necroptosis, thereby preventing host cell death pathway and allowing viral evasion. This Homo sapiens (Human) protein is Receptor-interacting serine/threonine-protein kinase 3.